The following is a 792-amino-acid chain: Ubiquitin carboxyl-terminal hydrolase 10 (792 aa).

Ala2 is subject to N-acetylalanine. Residues 2-99 (ALHNPQYIFG…ILGCTTSKKI (98 aa)) are interaction with p53/TP53. The G3BP1-binding stretch occupies residues 6–21 (PQYIFGDFSPDEFNQF). Position 24 is a phosphothreonine (Thr24). The segment at 126–164 (SNAEAETLENDSGAGGLGQRERKKKKKRPPGYYSYLKDG) is disordered. Phosphoserine occurs at positions 208 and 223. Basic and acidic residues predominate over residues 300–309 (DEGADLDPAK). Positions 300–323 (DEGADLDPAKPESQSPPAESALSA) are disordered. At Ser314 the chain carries Phosphoserine. Position 330 is a phosphoserine; by ATM (Ser330). The tract at residues 350 to 369 (PMAYVETKCSPPVPSPLASE) is disordered. A phosphoserine mark is found at Ser359 and Ser364. Residues 409-789 (RGLINKGNWC…TAYLLYYRRV (381 aa)) enclose the USP domain. The Nucleophile role is filled by Cys418. Ser541 carries the phosphoserine modification. The interval 542-580 (PTHEKHSVSNGPRSDLIEDEELEDTGKGSEDEWEQVGPK) is disordered. The residue at position 566 (Thr566) is a Phosphothreonine. Residue Ser570 is modified to Phosphoserine. Residue His743 is the Proton acceptor of the active site.

It belongs to the peptidase C19 family. USP10 subfamily. As to quaternary structure, found in a deubiquitination complex with TANK, USP10 and ZC3H12A; this complex inhibits genotoxic stress- or interleukin-1-beta (IL1B)-mediated NF-kappa-B activation by promoting IKBKG or TRAF6 deubiquitination. Interacts with IKBKG; this interaction increases in response to DNA damage. Interacts with TANK; this interaction increases in response to DNA damage. Interacts with TRAF6; this interaction increases in response to DNA damage. Interacts with ZC3H12A; this interaction increases in response to DNA damage. Interacts with G3BP1 (via NTF2 domain) and G3BP2 (via NTF2 domain); inhibiting stress granule formation. Phosphorylated by ATM following DNA damage, leading to stabilization and translocation it to the nucleus. Post-translationally, ubiquitinated. Deubiquitinated by USP13.

It localises to the cytoplasm. The protein localises to the nucleus. It is found in the early endosome. It catalyses the reaction Thiol-dependent hydrolysis of ester, thioester, amide, peptide and isopeptide bonds formed by the C-terminal Gly of ubiquitin (a 76-residue protein attached to proteins as an intracellular targeting signal).. With respect to regulation, specifically inhibited by spautin-1 (specific and potent autophagy inhibitor-1), a derivative of MBCQ that binds to USP10 and inhibits deubiquitinase activity. Regulated by PIK3C3/VPS34-containing complexes. Functionally, hydrolase that can remove conjugated ubiquitin from target proteins such as p53/TP53, RPS2/us5, RPS3/us3, RPS10/eS10, BECN1, SNX3 and CFTR. Acts as an essential regulator of p53/TP53 stability: in unstressed cells, specifically deubiquitinates p53/TP53 in the cytoplasm, leading to counteract MDM2 action and stabilize p53/TP53. Following DNA damage, translocates to the nucleus and deubiquitinates p53/TP53, leading to regulate the p53/TP53-dependent DNA damage response. Component of a regulatory loop that controls autophagy and p53/TP53 levels: mediates deubiquitination of BECN1, a key regulator of autophagy, leading to stabilize the PIK3C3/VPS34-containing complexes. In turn, PIK3C3/VPS34-containing complexes regulate USP10 stability, suggesting the existence of a regulatory system by which PIK3C3/VPS34-containing complexes regulate p53/TP53 protein levels via USP10 and USP13. Does not deubiquitinate MDM2. Plays a key role in 40S ribosome subunit recycling when a ribosome has stalled during translation: acts both by inhibiting formation of stress granules, which store stalled translation pre-initiation complexes, and mediating deubiquitination of 40S ribosome subunits. Acts as a negative regulator of stress granules formation by lowering G3BP1 and G3BP2 valence, thereby preventing G3BP1 and G3BP2 ability to undergo liquid-liquid phase separation (LLPS) and assembly of stress granules. Promotes 40S ribosome subunit recycling following ribosome dissociation in response to ribosome stalling by mediating deubiquitination of 40S ribosomal proteins RPS2/us5, RPS3/us3 and RPS10/eS10, thereby preventing their degradation by the proteasome. Part of a ribosome quality control that takes place when ribosomes have stalled during translation initiation (iRQC): USP10 acts by removing monoubiquitination of RPS2/us5 and RPS3/us3, promoting 40S ribosomal subunit recycling. Deubiquitinates CFTR in early endosomes, enhancing its endocytic recycling. Involved in a TANK-dependent negative feedback response to attenuate NF-kappa-B activation via deubiquitinating IKBKG or TRAF6 in response to interleukin-1-beta (IL1B) stimulation or upon DNA damage. Deubiquitinates TBX21 leading to its stabilization. Plays a negative role in the RLR signaling pathway upon RNA virus infection by blocking the RIGI-mediated MAVS activation. Mechanistically, removes the unanchored 'Lys-63'-linked polyubiquitin chains of MAVS to inhibit its aggregation, essential for its activation. This Mus musculus (Mouse) protein is Ubiquitin carboxyl-terminal hydrolase 10 (Usp10).